Reading from the N-terminus, the 316-residue chain is RNA interference defective protein 11 (316 aa).

The RING-type; degenerate zinc finger occupies 183–218 (CYINFNCQTSKVMFGCGHVYCEQCLNSWNDKPCSVC).

As to quaternary structure, interacts (via RING-type zinc finger domain) with rde-10.

In terms of biological role, in complex with rde-10, required in the endogenous and exogenous siRNA pathway for biogenesis and accumulation of secondary small interfering RNA (siRNA) intermediates, such as 22G-siRNAs derived from ergo-1 targets. The protein is RNA interference defective protein 11 of Caenorhabditis elegans.